The primary structure comprises 310 residues: Protoheme IX farnesyltransferase 2 (310 aa).

Transmembrane regions (helical) follow at residues 25–45 (PGII…AAKG), 49–69 (LVLM…GCAI), 98–118 (HVLL…ALFT), 121–141 (LALL…SLYM), 145–165 (SVYG…VGYC), 176–196 (VILL…IAIF), 222–242 (IVLY…AGYT), 245–265 (AFMA…LKGY), and 277–297 (QVFG…ALDF).

The protein belongs to the UbiA prenyltransferase family. Protoheme IX farnesyltransferase subfamily.

It localises to the cell inner membrane. The catalysed reaction is heme b + (2E,6E)-farnesyl diphosphate + H2O = Fe(II)-heme o + diphosphate. It functions in the pathway porphyrin-containing compound metabolism; heme O biosynthesis; heme O from protoheme: step 1/1. Converts heme B (protoheme IX) to heme O by substitution of the vinyl group on carbon 2 of heme B porphyrin ring with a hydroxyethyl farnesyl side group. This is Protoheme IX farnesyltransferase 2 from Shewanella sp. (strain MR-4).